A 466-amino-acid chain; its full sequence is Glutamyl-tRNA reductase (466 aa).

Substrate-binding positions include 47–50 (TCNR), serine 107, 112–114 (EQQ), and glutamine 118. The active-site Nucleophile is cysteine 48. An NADP(+)-binding site is contributed by 194–199 (GAGAMS).

It belongs to the glutamyl-tRNA reductase family. In terms of assembly, homodimer.

The enzyme catalyses (S)-4-amino-5-oxopentanoate + tRNA(Glu) + NADP(+) = L-glutamyl-tRNA(Glu) + NADPH + H(+). It functions in the pathway porphyrin-containing compound metabolism; protoporphyrin-IX biosynthesis; 5-aminolevulinate from L-glutamyl-tRNA(Glu): step 1/2. Its function is as follows. Catalyzes the NADPH-dependent reduction of glutamyl-tRNA(Glu) to glutamate 1-semialdehyde (GSA). The chain is Glutamyl-tRNA reductase from Corynebacterium efficiens (strain DSM 44549 / YS-314 / AJ 12310 / JCM 11189 / NBRC 100395).